We begin with the raw amino-acid sequence, 560 residues long: Putative transport protein VSAL_I2029 (560 aa).

Transmembrane regions (helical) follow at residues 14-34 (ILLL…KIGS), 37-57 (LGSS…GYTF), 66-86 (FMLF…GIFL), 94-114 (LLVL…GYYF), and 161-181 (NLSV…ILLA). RCK C-terminal domains are found at residues 203–292 (RGIG…FRNG) and 293–376 (KEVF…KIGF). 5 helical membrane-spanning segments follow: residues 386–406 (LLAF…TMSF), 409–429 (VTFG…LGFL), 451–471 (GLLV…IEYF), 478–498 (VLAA…LVGA), and 539–559 (AGTY…MILL).

It belongs to the AAE transporter (TC 2.A.81) family. YbjL subfamily.

The protein localises to the cell membrane. This chain is Putative transport protein VSAL_I2029, found in Aliivibrio salmonicida (strain LFI1238) (Vibrio salmonicida (strain LFI1238)).